The sequence spans 320 residues: Tryptophan--tRNA ligase (320 aa).

Residues 8–10 (QPT) and 16–17 (GN) contribute to the ATP site. The short motif at 9–17 (PTGRPHWGN) is the 'HIGH' region element. Aspartate 131 lines the L-tryptophan pocket. Residues 143–145 (GVD), valine 182, and 189–193 (KMSKS) contribute to the ATP site. The short motif at 189 to 193 (KMSKS) is the 'KMSKS' region element.

This sequence belongs to the class-I aminoacyl-tRNA synthetase family. Homodimer.

It localises to the cytoplasm. It carries out the reaction tRNA(Trp) + L-tryptophan + ATP = L-tryptophyl-tRNA(Trp) + AMP + diphosphate + H(+). In terms of biological role, catalyzes the attachment of tryptophan to tRNA(Trp). In Rhodopirellula baltica (strain DSM 10527 / NCIMB 13988 / SH1), this protein is Tryptophan--tRNA ligase.